An 886-amino-acid chain; its full sequence is MWTPRVPPPRPALSFFLLLLLGVTYGLFPEEPPPLSVAPRDYLSHYPVFVGSGPGRLTAAEGAEDLNIQRVLRVNRTLFIGDRDNLYQVELEPSTSTELRYQRKLTWRSNPSDIDVCRMKGKQEGECRNFVKVLLLRDESTLFVCGSNAFNPICANYSMDTLQLLGDSISGMARCPYDPKHANVALFSDGMLFTATVTDFLAIDAVIYRSLGDRPTLRTVKHDSKWFKEPYFVHAVEWGSHVYFFFREIAMEFNYLEKVVVSRVARVCKNDVGGSPRVLEKQWTSFLKARLNCSVPGDSHFYFNVLQAVTGVVSLGGRPVILAVFSTPSNSIPGSAVCAFDMNQVAAVFEGRFREQKSPESIWTPVPEDQVPRPRPGCCAAPGMQYNASSALPDEILNFVKTHPLMDEAVPSLGHSPWIVRTLMRHQLTRVAVDVGAGPWGNQTIVFLGSEAGTVLKFLVKPNASVSGTTGPSIFLEEFETYRPDRCGRPSSAGEWGQRLLSLELDAASGGLLAAFPRCVVRVPVARCQLYSGCMKNCIGSQDPYCGWAPDGSCIFLRPGTSATFEQDVSGASTSGLGDCTGLLRASLSDDRAGLVSVNLLVTSSVAAFVVGAVVSGFSVGWFVGLRERRELARRKDKEAILAHGGSEAVLSVSRLGERRGTGPGGRGGAGGGPGGPPEALLAPLMQNGWTKAALLHGGPHDLDTGLLPTPEQTPLPQKRLPTPHPHAHALGSRAWDHSHALLSASASTSLLLLAPARASEQPQVPAEPGPESRLCAPRSCRASHPGDFPLTPHASPDRRRVVSAPTGPLDPSVGDGLPGPWSPPATSSLRRPGPHGPPTAALRRTHTFNSGEARPGGHRPRRHPPADSTHLLPCGTGERTAPPVP.

The signal sequence occupies residues 1–26 (MWTPRVPPPRPALSFFLLLLLGVTYG). Topologically, residues 27–605 (LFPEEPPPLS…VSVNLLVTSS (579 aa)) are extracellular. Positions 32 to 525 (PPPLSVAPRD…FPRCVVRVPV (494 aa)) constitute a Sema domain. Residue Asn75 is glycosylated (N-linked (GlcNAc...) asparagine). Intrachain disulfides connect Cys117–Cys127 and Cys145–Cys154. Residues Asn156 and Asn292 are each glycosylated (N-linked (GlcNAc...) asparagine). 2 disulfide bridges follow: Cys268–Cys379 and Cys293–Cys338. Asn387, Asn442, and Asn463 each carry an N-linked (GlcNAc...) asparagine glycan. Cystine bridges form between Cys487–Cys519, Cys528–Cys546, Cys534–Cys580, and Cys538–Cys554. A helical transmembrane segment spans residues 606 to 626 (VAAFVVGAVVSGFSVGWFVGL). The Cytoplasmic segment spans residues 627-886 (RERRELARRK…TGERTAPPVP (260 aa)). 3 disordered regions span residues 655–677 (RLGE…PGGP), 697–731 (HGGP…AHAL), and 761–886 (EQPQ…PPVP). Residues 662–674 (TGPGGRGGAGGGP) are compositionally biased toward gly residues. Arg667 carries the omega-N-methylarginine modification. Low complexity predominate over residues 707–718 (LLPTPEQTPLPQ).

Belongs to the semaphorin family. As to quaternary structure, homodimer. Binds specifically the SH3 domain of the protooncogene C-SRC. As to expression, in adulthood, it is expressed ubiquitously.

It is found in the cell membrane. In terms of biological role, functions as a cell surface repellent for mossy fibers of developing neurons in the hippocampus where it plays a role in axon guidance. May function through the PLXNA4 receptor expressed by mossy cell axons. The chain is Semaphorin-6B (Sema6b) from Mus musculus (Mouse).